The primary structure comprises 446 residues: Phosphoglucosamine mutase (446 aa).

The Phosphoserine intermediate role is filled by serine 99. Residues serine 99, aspartate 242, aspartate 244, and aspartate 246 each contribute to the Mg(2+) site. Serine 99 is modified (phosphoserine).

This sequence belongs to the phosphohexose mutase family. Mg(2+) is required as a cofactor. In terms of processing, activated by phosphorylation.

The catalysed reaction is alpha-D-glucosamine 1-phosphate = D-glucosamine 6-phosphate. Its function is as follows. Catalyzes the conversion of glucosamine-6-phosphate to glucosamine-1-phosphate. The sequence is that of Phosphoglucosamine mutase from Campylobacter curvus (strain 525.92).